The primary structure comprises 270 residues: Phosphodiesterase YaeI (270 aa).

Residues aspartate 56, histidine 58, aspartate 88, asparagine 120, histidine 209, and histidine 211 each coordinate a divalent metal cation.

This sequence belongs to the metallophosphoesterase superfamily. Requires a divalent metal cation as cofactor.

Its function is as follows. Shows phosphodiesterase activity, hydrolyzing phosphodiester bond in the artificial chromogenic substrate bis-p-nitrophenyl phosphate (bis-pNPP). This chain is Phosphodiesterase YaeI (yaeI), found in Escherichia coli (strain K12).